The primary structure comprises 207 residues: MSGIPEITAYPLPTAQQLPANLARWSLEPRRAVLLVHDMQRYFLRPLPESLRAGLVANAARLRRWCVEQGVQIAYTAQPGSMTEEQRGLLKDFWGPGMRASPADREVVEELAPGPDDWLLTKWRYSAFFHSDLLQRMRAAGRDQLVLCGVYAHVGVLISTVDAYSNDIQPFLVADAIADFSEAHHRMALEYAASRCAMVVTTDEVLE.

The Proton donor role is filled by aspartate 38. Substrate contacts are provided by residues glutamine 78, arginine 87, lysine 122, and 151–155; that span reads YAHVG.

The protein belongs to the isochorismatase family. Homodimer.

It catalyses the reaction (2S)-2-amino-4-deoxychorismate + H2O = (5S,6S)-6-amino-5-hydroxycyclohexa-1,3-diene-1-carboxyate + pyruvate. It participates in antibiotic biosynthesis; phenazine biosynthesis. In terms of biological role, involved in the biosynthesis of the antibiotic phenazine, a nitrogen-containing heterocyclic molecule. PhzD1 (operon phzA1B1C1E1F1G1) has a role in the biosynthesis of the phenazine during planktonic growth. Catalyzes the hydrolysis of the vinyl ether functional group of 2-amino-2-deoxyisochorismate (ADIC), yielding pyruvate and trans-2,3-dihydro-3-hydroxyanthranilic acid (DHHA). Also able to act on isochorismate, chorismate and 4-amino-4-deoxychorismate (ADC) as substrates. The sequence is that of Phenazine biosynthesis protein PhzD1 from Pseudomonas aeruginosa (strain ATCC 15692 / DSM 22644 / CIP 104116 / JCM 14847 / LMG 12228 / 1C / PRS 101 / PAO1).